The following is a 728-amino-acid chain: Protein psiK (728 aa).

An N-terminal signal peptide occupies residues 1 to 20 (MKKTFIFLYCVVLFISTTLA). The Extracellular segment spans residues 21–666 (VEMKKTQDFN…FICKTAAVVS (646 aa)). N-linked (GlcNAc...) asparagine glycans are attached at residues Asn61, Asn74, and Asn104. Residues 118 to 266 (MNLDDKSNYF…YDFCGVCTGN (149 aa)) form the PA14 domain. N-linked (GlcNAc...) asparagine glycans are attached at residues Asn272, Asn326, Asn335, Asn438, Asn543, and Asn638. Residues 667-687 (VGVAVGVAVGGAIALGVFIFA) form a helical membrane-spanning segment. At 688 to 728 (GKKGYDYWKASQGVTMATSNANPLYESNPSGGENPIYTSPN) the chain is on the cytoplasmic side.

It belongs to the prespore-cell-inducing factor family.

Its subcellular location is the membrane. The sequence is that of Protein psiK (psiK) from Dictyostelium discoideum (Social amoeba).